We begin with the raw amino-acid sequence, 320 residues long: MRISTLDRRDMKHIHIIDSHTGGEPTRVVVSGFPALGGGTMAERLAVLAREHDRYRAACILEPRGSDVLVGALLCEPVSAGAAAGVIFFNNAGYLGMCGHGTIGLVRTLHHMGRIGPGVHRIETPVGDVEATLHDDLSVSVRNVLAYRHAKDVVVDVPGHGAVTGDVAWGGNWFFLVSDHGQRVAGENVAALAAYASAVRAALERAGVTGRDGAPIDHIELFADDPEYDSRSFVLCPGHAYDRSPCGTGTSAKLACLAADGKLAAGVTWRQASVIGSVFSASYAAAEGGVVPTIRGSAHLSAEATLVIEDDDPFGWGIAS.

Cys98 acts as the Proton acceptor in catalysis. Residues 99 to 100 (GH), His218, and Asp242 contribute to the substrate site. Cys246 serves as the catalytic Proton donor. 247-248 (GT) contacts substrate.

Belongs to the proline racemase family.

It catalyses the reaction trans-4-hydroxy-L-proline = cis-4-hydroxy-D-proline. In terms of biological role, catalyzes the epimerization of trans-4-hydroxy-L-proline (t4LHyp) to cis-4-hydroxy-D-proline (c4DHyp). Is likely involved in a degradation pathway that converts t4LHyp to alpha-ketoglutarate. Displays no proline racemase activity. The protein is 4-hydroxyproline 2-epimerase of Burkholderia pseudomallei (strain 1710b).